The following is a 302-amino-acid chain: RNA polymerase II holoenzyme cyclin-like subunit (302 aa).

Positions 53 to 142 (QQLIKLGKRM…LGECEFSLIS (90 aa)) constitute a Cyclin N-terminal domain.

Belongs to the cyclin family. Cyclin C subfamily. Component of the srb8-11 complex, a regulatory module of the Mediator complex.

Its subcellular location is the nucleus. Functionally, component of the srb8-11 complex. The srb8-11 complex is a regulatory module of the Mediator complex which is itself involved in regulation of basal and activated RNA polymerase II-dependent transcription. The srb8-11 complex may be involved in the transcriptional repression of a subset of genes regulated by Mediator. It may inhibit the association of the Mediator complex with RNA polymerase II to form the holoenzyme complex. The srb8-11 complex phosphorylates the C-terminal domain (CTD) of the largest subunit of RNA polymerase II. The chain is RNA polymerase II holoenzyme cyclin-like subunit (ssn8) from Aspergillus fumigatus (strain ATCC MYA-4609 / CBS 101355 / FGSC A1100 / Af293) (Neosartorya fumigata).